Here is a 353-residue protein sequence, read N- to C-terminus: tRNA-specific 2-thiouridylase MnmA 2 (353 aa).

Residues A9–S16 and M35 each bind ATP. Catalysis depends on C98, which acts as the Nucleophile. A disulfide bridge connects residues C98 and C194. G122 provides a ligand contact to ATP. The interval K144–Q146 is interaction with tRNA. The active-site Cysteine persulfide intermediate is the C194. Residues R300–Y301 form an interaction with tRNA region.

The protein belongs to the MnmA/TRMU family.

It is found in the cytoplasm. The catalysed reaction is S-sulfanyl-L-cysteinyl-[protein] + uridine(34) in tRNA + AH2 + ATP = 2-thiouridine(34) in tRNA + L-cysteinyl-[protein] + A + AMP + diphosphate + H(+). Its function is as follows. Catalyzes the 2-thiolation of uridine at the wobble position (U34) of tRNA, leading to the formation of s(2)U34. This is tRNA-specific 2-thiouridylase MnmA 2 from Clostridium botulinum (strain ATCC 19397 / Type A).